A 276-amino-acid polypeptide reads, in one-letter code: Undecaprenyl-diphosphatase 1 (276 aa).

Helical transmembrane passes span 44-63 (ALAF…IWEY), 85-105 (VNLL…ADLI), 109-129 (LFNP…MLWA), 183-203 (AATE…AVYS), 214-234 (GDFA…MLAV), and 249-269 (FAWY…LGMI).

This sequence belongs to the UppP family.

Its subcellular location is the cell inner membrane. It carries out the reaction di-trans,octa-cis-undecaprenyl diphosphate + H2O = di-trans,octa-cis-undecaprenyl phosphate + phosphate + H(+). Its function is as follows. Catalyzes the dephosphorylation of undecaprenyl diphosphate (UPP). Confers resistance to bacitracin. This Stutzerimonas stutzeri (strain A1501) (Pseudomonas stutzeri) protein is Undecaprenyl-diphosphatase 1.